A 181-amino-acid chain; its full sequence is Alkyl hydroperoxide reductase AhpD (181 aa).

Cysteine 130 (proton donor) is an active-site residue. Cysteine 130 and cysteine 133 are joined by a disulfide. Cysteine 133 serves as the catalytic Cysteine sulfenic acid (-SOH) intermediate.

Belongs to the AhpD family.

It carries out the reaction N(6)-[(R)-dihydrolipoyl]-L-lysyl-[lipoyl-carrier protein] + a hydroperoxide = N(6)-[(R)-lipoyl]-L-lysyl-[lipoyl-carrier protein] + an alcohol + H2O. Antioxidant protein with alkyl hydroperoxidase activity. Required for the reduction of the AhpC active site cysteine residues and for the regeneration of the AhpC enzyme activity. This chain is Alkyl hydroperoxide reductase AhpD, found in Gluconacetobacter diazotrophicus (strain ATCC 49037 / DSM 5601 / CCUG 37298 / CIP 103539 / LMG 7603 / PAl5).